We begin with the raw amino-acid sequence, 239 residues long: Orotidine 5'-phosphate decarboxylase (239 aa).

Substrate-binding positions include Asp12, Lys34, 61 to 70, Thr125, Arg188, Gln197, Gly217, and Arg218; that span reads DLKFHDIPNT. The active-site Proton donor is Lys63.

Belongs to the OMP decarboxylase family. Type 1 subfamily. Homodimer.

It catalyses the reaction orotidine 5'-phosphate + H(+) = UMP + CO2. Its pathway is pyrimidine metabolism; UMP biosynthesis via de novo pathway; UMP from orotate: step 2/2. Functionally, catalyzes the decarboxylation of orotidine 5'-monophosphate (OMP) to uridine 5'-monophosphate (UMP). In Syntrophomonas wolfei subsp. wolfei (strain DSM 2245B / Goettingen), this protein is Orotidine 5'-phosphate decarboxylase.